A 356-amino-acid chain; its full sequence is Tyrosine recombinase XerS (356 aa).

In terms of domain architecture, Core-binding (CB) spans 16–121; it reads IMPWYVLEYY…ALSSLFKYLT (106 aa). In terms of domain architecture, Tyr recombinase spans 169–354; sequence EFLEYIDCEY…VNDEQKNALD (186 aa). Catalysis depends on residues Arg-210, Lys-234, His-306, Arg-309, and His-332. Tyr-341 acts as the O-(3'-phospho-DNA)-tyrosine intermediate in catalysis.

This sequence belongs to the 'phage' integrase family. XerS subfamily.

The protein resides in the cytoplasm. With respect to regulation, ftsK is required for recombination. Site-specific tyrosine recombinase, which acts by catalyzing the cutting and rejoining of the recombining DNA molecules. Essential to convert dimers of the bacterial chromosome into monomers to permit their segregation at cell division. This chain is Tyrosine recombinase XerS, found in Streptococcus agalactiae serotype Ia (strain ATCC 27591 / A909 / CDC SS700).